The following is a 340-amino-acid chain: Delta-aminolevulinic acid dehydratase (340 aa).

3 residues coordinate Zn(2+): Cys133, Cys135, and Cys143. Residue Lys210 is the Schiff-base intermediate with substrate of the active site. Arg220 and Arg232 together coordinate 5-aminolevulinate. Lys263 functions as the Schiff-base intermediate with substrate in the catalytic mechanism. Positions 290 and 329 each coordinate 5-aminolevulinate.

This sequence belongs to the ALAD family. As to quaternary structure, homooctamer. Zn(2+) serves as cofactor.

The enzyme catalyses 2 5-aminolevulinate = porphobilinogen + 2 H2O + H(+). It participates in porphyrin-containing compound metabolism; protoporphyrin-IX biosynthesis; coproporphyrinogen-III from 5-aminolevulinate: step 1/4. In terms of biological role, catalyzes an early step in the biosynthesis of tetrapyrroles. Binds two molecules of 5-aminolevulinate per subunit, each at a distinct site, and catalyzes their condensation to form porphobilinogen. The chain is Delta-aminolevulinic acid dehydratase (HEM2) from Candida glabrata (strain ATCC 2001 / BCRC 20586 / JCM 3761 / NBRC 0622 / NRRL Y-65 / CBS 138) (Yeast).